Here is a 431-residue protein sequence, read N- to C-terminus: Glutamate-1-semialdehyde 2,1-aminomutase 2 (431 aa).

K268 is modified (N6-(pyridoxal phosphate)lysine).

It belongs to the class-III pyridoxal-phosphate-dependent aminotransferase family. HemL subfamily. As to quaternary structure, homodimer. Requires pyridoxal 5'-phosphate as cofactor.

The protein resides in the cytoplasm. The enzyme catalyses (S)-4-amino-5-oxopentanoate = 5-aminolevulinate. It functions in the pathway porphyrin-containing compound metabolism; protoporphyrin-IX biosynthesis; 5-aminolevulinate from L-glutamyl-tRNA(Glu): step 2/2. This Bacillus licheniformis (strain ATCC 14580 / DSM 13 / JCM 2505 / CCUG 7422 / NBRC 12200 / NCIMB 9375 / NCTC 10341 / NRRL NRS-1264 / Gibson 46) protein is Glutamate-1-semialdehyde 2,1-aminomutase 2.